The following is a 204-amino-acid chain: Glycerol-3-phosphate acyltransferase (204 aa).

Helical transmembrane passes span 8-28 (ILIFAYLLGSINSAIIVCYIF), 53-73 (VPAAITLIFDILKGLVPVVIA), 81-101 (FITACTALYAILGHIFPIFFG), 116-136 (FGFSWILGLIFVITWLCVAII), and 155-175 (VIFTSDLQVAAPFLIIAIIIL).

This sequence belongs to the PlsY family. In terms of assembly, probably interacts with PlsX.

The protein localises to the cell inner membrane. It carries out the reaction an acyl phosphate + sn-glycerol 3-phosphate = a 1-acyl-sn-glycero-3-phosphate + phosphate. It functions in the pathway lipid metabolism; phospholipid metabolism. In terms of biological role, catalyzes the transfer of an acyl group from acyl-phosphate (acyl-PO(4)) to glycerol-3-phosphate (G3P) to form lysophosphatidic acid (LPA). This enzyme utilizes acyl-phosphate as fatty acyl donor, but not acyl-CoA or acyl-ACP. In Francisella tularensis subsp. mediasiatica (strain FSC147), this protein is Glycerol-3-phosphate acyltransferase.